Here is a 216-residue protein sequence, read N- to C-terminus: Thymidylate kinase (216 aa).

10–17 (GVDGSGKT) serves as a coordination point for ATP.

Belongs to the thymidylate kinase family.

It carries out the reaction dTMP + ATP = dTDP + ADP. Phosphorylation of dTMP to form dTDP in both de novo and salvage pathways of dTTP synthesis. This Pelotomaculum thermopropionicum (strain DSM 13744 / JCM 10971 / SI) protein is Thymidylate kinase.